The primary structure comprises 207 residues: ATP-dependent Clp protease proteolytic subunit (207 aa).

The active-site Nucleophile is the Ser112. His137 is an active-site residue.

Belongs to the peptidase S14 family. As to quaternary structure, fourteen ClpP subunits assemble into 2 heptameric rings which stack back to back to give a disk-like structure with a central cavity, resembling the structure of eukaryotic proteasomes.

It localises to the cytoplasm. It carries out the reaction Hydrolysis of proteins to small peptides in the presence of ATP and magnesium. alpha-casein is the usual test substrate. In the absence of ATP, only oligopeptides shorter than five residues are hydrolyzed (such as succinyl-Leu-Tyr-|-NHMec, and Leu-Tyr-Leu-|-Tyr-Trp, in which cleavage of the -Tyr-|-Leu- and -Tyr-|-Trp bonds also occurs).. In terms of biological role, cleaves peptides in various proteins in a process that requires ATP hydrolysis. Has a chymotrypsin-like activity. Plays a major role in the degradation of misfolded proteins. The sequence is that of ATP-dependent Clp protease proteolytic subunit from Bacteroides fragilis (strain ATCC 25285 / DSM 2151 / CCUG 4856 / JCM 11019 / LMG 10263 / NCTC 9343 / Onslow / VPI 2553 / EN-2).